Consider the following 521-residue polypeptide: MIAALFTTNLQLGAVGVFIFALLAFAFNKLTTWEYSIPKEVQWVDRRTQPFSYLRAKARALARSKENTLEAYFRFNKLGKAAALAVPFGRPLLLLPQTFVRWIVDQPESIISLDPIHDDFHVFVGGDLTGDHTVQELLRRELTLNLDKLISVINDEIVCALDDVLGNSPEWKSTSLADDLKTIVARTSNRVFVGKDLCRNKHYISTVKGLALVIMPETVLQDLIPQFLKGPLSRITKAFNNIYGMKKFSSLLLGVVRQRYIDVKDVLEGSGDKTRLPDDLLTWMVQKSIRKGESSANIDKLLVARIAMANLAAIETTTAAMTRSVLDLVTQGSEGGFLKAVQEETLAVVEGCNYEPSKKDVLKLVLTENAIKEALRLQVAFPGLMRQVVAPNGVTLENGLHVPCGTRLGVSAAGIHVDESIYEDPTTYNPGRFLVRDLDPRGDPSPMWKGNENYLAFSLGRRSCPGRWYVTDQLKLTLAHIFSKYEIRFEKAAETASALRKILPGAPQDRVMIRRRSVGKR.

The signal sequence occupies residues 1-26 (MIAALFTTNLQLGAVGVFIFALLAFA). Cys464 lines the heme pocket.

It belongs to the cytochrome P450 family. Heme serves as cofactor.

It participates in mycotoxin biosynthesis. In terms of biological role, cytochrome P450 monooxygenase; part of the gene cluster that mediates the biosynthesis of pneumocandins, lipohexapeptides of the echinocandin family that prevent fungal cell wall formation by non-competitive inhibition of beta-1,3-glucan synthase. The 10,12-dimethylmyristoyl side chain is synthesized by the reducing polyketide synthase gloL/GLPKS4. The thioesterase gloN/GLHYD exclusively interacts with gloL/GLPKS4 to maintain turnover of the polyketide side chain. The 10R,12S-dimethylmyristic acid is then transferred to the first thiolation domain of the nonribosomal peptide synthetase gloA/GLNRPS4 by the acyl-AMP ligase gloD/GLligase, followed by its acylation to L-ornithine to trigger elongation of the cyclic hexapeptide. L-ornithine, 4R-hydroxyl-L-proline (generated from L-proline by the dioxygenase gloF/GLOXY2), 3S-hydroxyl-L-homotyrosine (generated by gloG/GLHtyB, gloH/GLHtyA, gloI/GLHtyC, gloJ/GLHtyD and hydroxylated at C-3 by the dioxygenase gloM/GLOXY1), 3R-hydroxyl-L-glutamine (generated from L-glutamine probably by the dioxygenase gloE/GLOXY3) and 3S-hydroxyl-L-proline (generated from L-proline by the dioxygenase gloF/GLOXY2 to yield pneumocandin B0), or 3S-hydroxyl-4S-methyl-L-proline (generated from L-leucine by the dioxygenase gloC/GLOXY4 to yield pneumocandin A0) are sequentially added to the growing chain. The last C domain of gloA/GLNRPS4 is proposed to be responsible for cyclization by condensation to form the peptide bond between L-ornithine and 3S-hydroxyl-4S-methyl-L-proline (for pneumocandin A0) or 3S-hydroxyl-L-proline (for pneumocandin B0). Finally, the subsequent C-4 hydroxylation of 3S-hydroxyl-L-homotyrosine and L-ornithine dihydroxylation at C-4 and C-5 are performed by the cytochrome P450 monooxygenases gloP/GLP450-1 and gloO/GLP450-2, respectively. The sequence is that of Cytochrome P450 monooxygenase gloO from Glarea lozoyensis (strain ATCC 20868 / MF5171).